A 254-amino-acid chain; its full sequence is Pectate lyase E (254 aa).

The first 17 residues, 1-17 (MYQPLLLLPLLLTSAFA), serve as a signal peptide directing secretion. The segment at 227–254 (TNNNSKEPKKKSSGPSSYCKYSEPLSKC) is disordered. Asn229 carries N-linked (GlcNAc...) asparagine glycosylation. The segment covering 239 to 254 (SGPSSYCKYSEPLSKC) has biased composition (low complexity).

It belongs to the polysaccharide lyase 3 family. Ca(2+) is required as a cofactor.

The protein localises to the secreted. It catalyses the reaction Eliminative cleavage of (1-&gt;4)-alpha-D-galacturonan to give oligosaccharides with 4-deoxy-alpha-D-galact-4-enuronosyl groups at their non-reducing ends.. In terms of biological role, pectinolytic enzyme consist of four classes of enzymes: pectin lyase, polygalacturonase, pectin methylesterase and rhamnogalacturonase. Among pectinolytic enzymes, pectin lyase is the most important in depolymerization of pectin, since it cleaves internal glycosidic bonds of highly methylated pectins. Favors pectate, the anion, over pectin, the methyl ester. The chain is Pectate lyase E (plyE) from Emericella nidulans (strain FGSC A4 / ATCC 38163 / CBS 112.46 / NRRL 194 / M139) (Aspergillus nidulans).